A 286-amino-acid chain; its full sequence is Phycobilisome 31.8 kDa linker polypeptide, phycoerythrin-associated, rod (286 aa).

Residues 2–179 (PFGPASRLGV…LVRGASSSSL (178 aa)) form the PBS-linker domain. A CpcD-like domain is found at 231–286 (GKVYRIEVTGYRAKTFNNISKFRRSNQVFLVPYEKLSQEYQRIHQQGGVIASITPV).

The protein belongs to the phycobilisome linker protein family. In terms of assembly, the phycobilisome is a hemidiscoidal structure that is composed of two distinct substructures: a core complex and six rods radiating from the core.

Its subcellular location is the cellular thylakoid membrane. Rod linker protein, associated with phycoerythrocyanin. Linker polypeptides determine the state of aggregation and the location of the disk-shaped phycobiliprotein units within the phycobilisome and modulate their spectroscopic properties in order to mediate a directed and optimal energy transfer. The protein is Phycobilisome 31.8 kDa linker polypeptide, phycoerythrin-associated, rod (cpeC) of Microchaete diplosiphon (Fremyella diplosiphon).